Reading from the N-terminus, the 503-residue chain is ATP synthase subunit alpha (503 aa).

ATP is bound at residue 170 to 177 (GDRKTGKT).

This sequence belongs to the ATPase alpha/beta chains family. F-type ATPases have 2 components, CF(1) - the catalytic core - and CF(0) - the membrane proton channel. CF(1) has five subunits: alpha(3), beta(3), gamma(1), delta(1), epsilon(1). CF(0) has four main subunits: a, b, b' and c.

The protein resides in the cellular thylakoid membrane. The catalysed reaction is ATP + H2O + 4 H(+)(in) = ADP + phosphate + 5 H(+)(out). Produces ATP from ADP in the presence of a proton gradient across the membrane. The alpha chain is a regulatory subunit. The protein is ATP synthase subunit alpha of Rippkaea orientalis (strain PCC 8801 / RF-1) (Cyanothece sp. (strain PCC 8801)).